A 1170-amino-acid chain; its full sequence is PAN2-PAN3 deadenylation complex catalytic subunit PAN2 (1170 aa).

WD repeat units follow at residues 104–144 and 280–319; these read ENMK…IIKQ and NISS…HFTD. The linker stretch occupies residues 319-458; that stretch reads DMAIPIELPE…DPNEIESLKP (140 aa). The disordered stretch occupies residues 399-459; the sequence is RRNQVEDTRN…PNEIESLKPE (61 aa). Positions 443 to 452 are enriched in acidic residues; that stretch reads VDQEPEDPNE. The USP domain maps to 459 to 846; the sequence is EAPPLYRNLE…MPAVLLFQIK (388 aa). Residues 894 to 1067 form the Exonuclease domain; sequence VALDTEFVSL…EDARTALKLY (174 aa). A divalent metal cation contacts are provided by Asp897, Glu899, Asp1006, and Asp1059. The segment at 1094 to 1170 is disordered; that stretch reads NFKPPRREDR…PSKASSPLPK (77 aa). Basic and acidic residues predominate over residues 1098-1108; that stretch reads PRREDREKELQ. The span at 1109-1119 shows a compositional bias: polar residues; that stretch reads RQSTPPNSTAP.

Belongs to the peptidase C19 family. PAN2 subfamily. As to quaternary structure, forms a heterotrimer with an asymmetric homodimer of the regulatory subunit PAN3 to form the poly(A)-nuclease (PAN) deadenylation complex. A divalent metal cation is required as a cofactor.

Its subcellular location is the cytoplasm. It catalyses the reaction Exonucleolytic cleavage of poly(A) to 5'-AMP.. With respect to regulation, positively regulated by the regulatory subunit PAN3. Functionally, catalytic subunit of the poly(A)-nuclease (PAN) deadenylation complex, one of two cytoplasmic mRNA deadenylases involved in mRNA turnover. PAN specifically shortens poly(A) tails of RNA and the activity is stimulated by poly(A)-binding protein PAB1. PAN deadenylation is followed by rapid degradation of the shortened mRNA tails by the CCR4-NOT complex. Deadenylated mRNAs are then degraded by two alternative mechanisms, namely exosome-mediated 3'-5' exonucleolytic degradation, or deadenylation-dependent mRNA decaping and subsequent 5'-3' exonucleolytic degradation by XRN1. May also be involved in post-transcriptional maturation of mRNA poly(A) tails. The protein is PAN2-PAN3 deadenylation complex catalytic subunit PAN2 of Chaetomium thermophilum (strain DSM 1495 / CBS 144.50 / IMI 039719) (Thermochaetoides thermophila).